We begin with the raw amino-acid sequence, 413 residues long: Ribosomal RNA large subunit methyltransferase G (413 aa).

Positions 389-413 are disordered; the sequence is EAEVEQAFDTETPHPQSALYGKPKA.

This sequence belongs to the methyltransferase superfamily. RlmG family.

Its subcellular location is the cytoplasm. It catalyses the reaction guanosine(1835) in 23S rRNA + S-adenosyl-L-methionine = N(2)-methylguanosine(1835) in 23S rRNA + S-adenosyl-L-homocysteine + H(+). Functionally, specifically methylates the guanine in position 1835 (m2G1835) of 23S rRNA. This Shewanella pealeana (strain ATCC 700345 / ANG-SQ1) protein is Ribosomal RNA large subunit methyltransferase G.